The sequence spans 464 residues: Asparagine--tRNA ligase (464 aa).

This sequence belongs to the class-II aminoacyl-tRNA synthetase family. As to quaternary structure, homodimer.

It is found in the cytoplasm. It carries out the reaction tRNA(Asn) + L-asparagine + ATP = L-asparaginyl-tRNA(Asn) + AMP + diphosphate + H(+). The chain is Asparagine--tRNA ligase from Clostridium botulinum (strain Alaska E43 / Type E3).